The sequence spans 412 residues: CapZ-interacting protein (412 aa).

Disordered regions lie at residues 1-84 (MEER…KSSP) and 99-412 (ALLP…DTRM). The segment covering 7–20 (ETNSNVDSSAQPSV) has biased composition (polar residues). Residues Ser-68, Ser-82, Ser-83, Ser-105, Ser-108, Ser-116, Ser-120, and Ser-123 each carry the phosphoserine modification. Thr-124 bears the Phosphothreonine mark. Residues Ser-126, Ser-127, Ser-135, and Ser-143 each carry the phosphoserine modification. The segment covering 159 to 176 (VRTRGSIKRRPPSRRFRR) has biased composition (basic residues). A phosphoserine mark is found at Ser-177, Ser-179, and Ser-216. Residues Thr-243 and Thr-256 each carry the phosphothreonine modification. Positions 248 to 258 (EKPEELVRTPE) are enriched in basic and acidic residues. Residue Ser-297 is modified to Phosphoserine. 2 stretches are compositionally biased toward basic and acidic residues: residues 298–312 (PREE…DTGK) and 319–330 (SEERVADEDRLG). Phosphoserine occurs at positions 333 and 401.

In terms of assembly, interacts with CAPZA2 and CAPZB. In terms of processing, dephosphorylation results in its dissociation from CAPZA2.

In terms of biological role, stress-induced phosphorylation of CAPZIP may regulate the ability of F-actin-capping protein to remodel actin filament assembly. The sequence is that of CapZ-interacting protein (Rcsd1) from Mus musculus (Mouse).